The sequence spans 429 residues: Enolase (429 aa).

A (2R)-2-phosphoglycerate-binding site is contributed by Q163. The Proton donor role is filled by E205. Residues D242, E286, and D313 each contribute to the Mg(2+) site. Residues K338, R367, S368, and K389 each contribute to the (2R)-2-phosphoglycerate site. K338 serves as the catalytic Proton acceptor.

It belongs to the enolase family. Mg(2+) serves as cofactor.

The protein resides in the cytoplasm. It is found in the secreted. Its subcellular location is the cell surface. The enzyme catalyses (2R)-2-phosphoglycerate = phosphoenolpyruvate + H2O. Its pathway is carbohydrate degradation; glycolysis; pyruvate from D-glyceraldehyde 3-phosphate: step 4/5. In terms of biological role, catalyzes the reversible conversion of 2-phosphoglycerate (2-PG) into phosphoenolpyruvate (PEP). It is essential for the degradation of carbohydrates via glycolysis. This Geobacter metallireducens (strain ATCC 53774 / DSM 7210 / GS-15) protein is Enolase.